We begin with the raw amino-acid sequence, 489 residues long: MNTTAPTGLLQQPRPFFMIFFVELWERFGYYGVQGILAVFFVKQLGFSQEQAFITFGAFAALVYGLISIGGYVGDHLLGTKRTLVLGAIVLAIGYFMTGMSLLNPDLIFIALGTIAVGNGLFKANPASLLSKCYQPKDPRLDGAFTLFYMSINIGSLLSLSLAPVIADKFGYAVTYNLCGAGLIVALLVYFACRGMVKNIGSEPDHKPLRFRNLLLVLLGTVVMIFLCAWLMHNVKIANLVLIVLSIVVTIFFFREAFRLDKTGRNKMFVAFILMIEAVLFYILYAQMPTSLNFFAINNVHHEILGFAINPVSFQALNPFWVVVASPVLAAIYTRLGSKGKDLTMPMKFTLGMFLCALGFLTAAAGMWFADAQGLTSPWFIVLVYLFQSLGELLISALGLAMVAALVPQHLMGFILGMWFLTQAAAFLLGGYVATFTAVPENITDPLQTLPIYTGVFSKIGLVTLAVTVVMAIMVPWLNRMINTPGTEQ.

Residues 1–27 lie on the Cytoplasmic side of the membrane; that stretch reads MNTTAPTGLLQQPRPFFMIFFVELWER. The chain crosses the membrane as a helical span at residues 28 to 48; sequence FGYYGVQGILAVFFVKQLGFS. Residues 49–52 lie on the Periplasmic side of the membrane; it reads QEQA. A helical membrane pass occupies residues 53 to 73; sequence FITFGAFAALVYGLISIGGYV. At 74–82 the chain is on the cytoplasmic side; it reads GDHLLGTKR. Residues 83 to 103 traverse the membrane as a helical segment; it reads TLVLGAIVLAIGYFMTGMSLL. The Periplasmic portion of the chain corresponds to 104–106; that stretch reads NPD. Residues 107–127 form a helical membrane-spanning segment; the sequence is LIFIALGTIAVGNGLFKANPA. Over 128–146 the chain is Cytoplasmic; the sequence is SLLSKCYQPKDPRLDGAFT. A helical membrane pass occupies residues 147-167; it reads LFYMSINIGSLLSLSLAPVIA. The Periplasmic segment spans residues 168–172; it reads DKFGY. The chain crosses the membrane as a helical span at residues 173-193; sequence AVTYNLCGAGLIVALLVYFAC. Topologically, residues 194 to 214 are cytoplasmic; sequence RGMVKNIGSEPDHKPLRFRNL. A helical membrane pass occupies residues 215-235; it reads LLVLLGTVVMIFLCAWLMHNV. Residue Lys-236 is a topological domain, periplasmic. The helical transmembrane segment at 237-257 threads the bilayer; it reads IANLVLIVLSIVVTIFFFREA. At 258–267 the chain is on the cytoplasmic side; the sequence is FRLDKTGRNK. Residues 268–288 form a helical membrane-spanning segment; sequence MFVAFILMIEAVLFYILYAQM. The Periplasmic portion of the chain corresponds to 289 to 315; the sequence is PTSLNFFAINNVHHEILGFAINPVSFQ. Residues 316 to 338 traverse the membrane as a helical segment; that stretch reads ALNPFWVVVASPVLAAIYTRLGS. The Cytoplasmic portion of the chain corresponds to 339-348; sequence KGKDLTMPMK. Residues 349–369 form a helical membrane-spanning segment; the sequence is FTLGMFLCALGFLTAAAGMWF. The Periplasmic segment spans residues 370-379; sequence ADAQGLTSPW. Residues 380 to 400 traverse the membrane as a helical segment; it reads FIVLVYLFQSLGELLISALGL. Over 401 to 410 the chain is Cytoplasmic; that stretch reads AMVAALVPQH. The chain crosses the membrane as a helical span at residues 411–431; the sequence is LMGFILGMWFLTQAAAFLLGG. Residues 432–454 lie on the Periplasmic side of the membrane; sequence YVATFTAVPENITDPLQTLPIYT. Residues 455–475 traverse the membrane as a helical segment; it reads GVFSKIGLVTLAVTVVMAIMV. Residues 476 to 489 are Cytoplasmic-facing; it reads PWLNRMINTPGTEQ.

This sequence belongs to the major facilitator superfamily. Proton-dependent oligopeptide transporter (POT/PTR) (TC 2.A.17) family. DtpB subfamily.

It localises to the cell inner membrane. Functionally, proton-dependent permease that transports di- and tripeptides. The chain is Dipeptide and tripeptide permease B from Salmonella typhimurium (strain LT2 / SGSC1412 / ATCC 700720).